A 505-amino-acid chain; its full sequence is Catalase (505 aa).

Residues 1–25 (MSRQDKKLTGVFGHPVSDRENSMTA) are disordered. Active-site residues include His56 and Asn129. Tyr339 contacts heme.

Belongs to the catalase family. Homodimer. Heme is required as a cofactor.

The catalysed reaction is 2 H2O2 = O2 + 2 H2O. Its function is as follows. Decomposes hydrogen peroxide into water and oxygen; serves to protect cells from the toxic effects of hydrogen peroxide. The polypeptide is Catalase (katA) (Staphylococcus aureus (strain MRSA252)).